The chain runs to 250 residues: Large ribosomal subunit protein uL29m (250 aa).

Residues 1–24 (MRPGAASIRTTGSVLAFLVPSAQC) constitute a mitochondrion transit peptide. The disordered stretch occupies residues 66–86 (VLSKKGSGDQPPKPVPITEKV).

It belongs to the universal ribosomal protein uL29 family. As to quaternary structure, component of the mitochondrial large ribosomal subunit. Mature mitochondrial ribosomes consist of a small (37S) and a large (54S) subunit. The 37S subunit contains at least 33 different proteins and 1 molecule of RNA (15S). The 54S subunit contains at least 45 different proteins and 1 molecule of RNA (21S).

It localises to the mitochondrion. In Phaeosphaeria nodorum (strain SN15 / ATCC MYA-4574 / FGSC 10173) (Glume blotch fungus), this protein is Large ribosomal subunit protein uL29m (MRPL4).